Consider the following 92-residue polypeptide: Putative defensin-like protein 225 (92 aa).

A signal peptide spans 1–26 (MKYGVLFMVSCGVMFLILSHVEEVEA). 3 disulfides stabilise this stretch: C32/C92, C42/C70, and C68/C88.

The protein belongs to the DEFL family.

It is found in the secreted. In Arabidopsis thaliana (Mouse-ear cress), this protein is Putative defensin-like protein 225 (SCRL1).